Consider the following 300-residue polypeptide: Dihydroorotate dehydrogenase B (NAD(+)), catalytic subunit (300 aa).

FMN is bound by residues Ser-20 and 44 to 45; that span reads KS. Substrate is bound by residues Lys-44, 68–72, and Asn-122; that span reads NAMGL. Asn-122 provides a ligand contact to FMN. Cys-125 functions as the Nucleophile in the catalytic mechanism. Lys-160 and Ile-186 together coordinate FMN. 187-188 is a substrate binding site; that stretch reads NT. Residues Gly-212, 238–239, and 260–261 contribute to the FMN site; these read GG and GT.

It belongs to the dihydroorotate dehydrogenase family. Type 1 subfamily. As to quaternary structure, heterotetramer of 2 PyrK and 2 PyrD type B subunits. Requires FMN as cofactor.

The protein localises to the cytoplasm. It carries out the reaction (S)-dihydroorotate + NAD(+) = orotate + NADH + H(+). The protein operates within pyrimidine metabolism; UMP biosynthesis via de novo pathway; orotate from (S)-dihydroorotate (NAD(+) route): step 1/1. Functionally, catalyzes the conversion of dihydroorotate to orotate with NAD(+) as electron acceptor. The protein is Dihydroorotate dehydrogenase B (NAD(+)), catalytic subunit (pyrD) of Pyrococcus furiosus (strain ATCC 43587 / DSM 3638 / JCM 8422 / Vc1).